We begin with the raw amino-acid sequence, 698 residues long: Serotransferrin (698 aa).

Residues 1–19 (MRLAVGALLVCAVLGLCLA) form the signal peptide. Transferrin-like domains lie at 25 to 347 (VRWC…NLRE) and 361 to 683 (VKWC…NLRK). Cystine bridges form between C28–C67 and C38–C58. R42 carries the post-translational modification Dimethylated arginine. S51 carries an O-linked (GalNAc...) serine glycan. Positions 82 and 114 each coordinate Fe(3+). Disulfide bonds link C137/C213, C156/C350, C177/C193, C180/C198, C190/C196, C246/C260, C358/C615, C364/C396, C374/C387, C421/C693, C437/C656, C469/C542, C493/C684, C503/C517, C514/C525, C582/C596, and C634/C639. 4 residues coordinate hydrogencarbonate: T139, R143, A145, and G146. Residue Y207 participates in Fe(3+) binding. Position 268 (H268) interacts with Fe(3+). A Phosphoserine; by FAM20C modification is found at S389. Fe(3+) is bound at residue D411. N432 is a glycosylation site (N-linked (GlcNAc...) (complex) asparagine). Y445 provides a ligand contact to Fe(3+). Hydrogencarbonate-binding residues include T471, R475, A477, and G478. N491 carries an N-linked (GlcNAc...) asparagine; atypical; partial glycan. Y536 lines the Fe(3+) pocket. H604 is a binding site for Fe(3+). N630 is a glycosylation site (N-linked (GlcNAc...) (complex) asparagine). S685 carries the phosphoserine; by FAM20C modification.

Belongs to the transferrin family. As to quaternary structure, monomer. Part of a complex composed of SLC40A1/ferroportin, TF/transferrin and HEPH/hephaestin that transfers iron from cells to transferrin. (Microbial infection) Binds to Neisseria transferrin-binding protein A (tbpA or tbp1). Forms a large complex with TbpA and TbpB. In terms of assembly, (Microbial infection) Binds to Neisseria transferrin-binding protein B (tbpb or tbp2). In terms of tissue distribution, expressed by the liver and secreted in plasma.

It is found in the secreted. Its function is as follows. Transferrins are iron binding transport proteins which can bind two Fe(3+) ions in association with the binding of an anion, usually bicarbonate. It is responsible for the transport of iron from sites of absorption and heme degradation to those of storage and utilization. Serum transferrin may also have a further role in stimulating cell proliferation. In terms of biological role, (Microbial infection) Serves as an iron source for Neisseria species, which capture the protein and extract its iron for their own use. Functionally, (Microbial infection) Serves as an iron source for parasite T.brucei (strain 427), which capture TF via its own transferrin receptor ESAG6:ESAG7 and extract its iron for its own use. In Homo sapiens (Human), this protein is Serotransferrin.